The chain runs to 342 residues: D-erythrose-4-phosphate dehydrogenase (342 aa).

NAD(+) is bound at residue 12-13 (RI). Residues 154–156 (SCT), Arg200, 213–214 (TK), and Arg236 each bind substrate. Cys155 acts as the Nucleophile in catalysis. Asn318 contributes to the NAD(+) binding site.

It belongs to the glyceraldehyde-3-phosphate dehydrogenase family. Epd subfamily. Homotetramer.

It localises to the cytoplasm. The enzyme catalyses D-erythrose 4-phosphate + NAD(+) + H2O = 4-phospho-D-erythronate + NADH + 2 H(+). Its pathway is cofactor biosynthesis; pyridoxine 5'-phosphate biosynthesis; pyridoxine 5'-phosphate from D-erythrose 4-phosphate: step 1/5. Catalyzes the NAD-dependent conversion of D-erythrose 4-phosphate to 4-phosphoerythronate. The chain is D-erythrose-4-phosphate dehydrogenase from Klebsiella pneumoniae (strain 342).